A 436-amino-acid polypeptide reads, in one-letter code: Serine/threonine-protein kinase 40 (436 aa).

Residues 1 to 10 (MKRRASDRGA) show a composition bias toward basic and acidic residues. Residues 1–25 (MKRRASDRGAGETSARAKALGSGIS) form a disordered region. The Protein kinase domain maps to 35–332 (FILGPRLGNS…DVLEALSSII (298 aa)). Residues 41 to 49 (LGNSPVPSI) and K66 each bind ATP. D197 serves as the catalytic Proton acceptor. The tract at residues 396 to 417 (RSWVPKRQSGAGVPPVRRLGHD) is disordered.

It belongs to the protein kinase superfamily. CAMK Ser/Thr protein kinase family.

It is found in the nucleus. The protein resides in the cytoplasm. It catalyses the reaction L-seryl-[protein] + ATP = O-phospho-L-seryl-[protein] + ADP + H(+). It carries out the reaction L-threonyl-[protein] + ATP = O-phospho-L-threonyl-[protein] + ADP + H(+). Its function is as follows. May be a negative regulator of NF-kappa-B and p53-mediated gene transcription. The protein is Serine/threonine-protein kinase 40 (STK40) of Bos taurus (Bovine).